Here is a 639-residue protein sequence, read N- to C-terminus: Chaperone protein HtpG (639 aa).

The a; substrate-binding stretch occupies residues 1 to 347 (MSQQETHGFQ…SNDLPLNVSR (347 aa)). The b stretch occupies residues 348-564 (EILQDNKVTT…EGEMSTQMIK (217 aa)). A c region spans residues 565 to 639 (LMQAAGQDVP…MNQMLLASVK (75 aa)).

The protein belongs to the heat shock protein 90 family. In terms of assembly, homodimer.

The protein localises to the cytoplasm. Molecular chaperone. Has ATPase activity. The polypeptide is Chaperone protein HtpG (Shewanella halifaxensis (strain HAW-EB4)).